The following is a 284-amino-acid chain: Bifunctional protein FolD 1 (284 aa).

NADP(+) contacts are provided by residues 164–166 (GRS), Ser-189, and Ile-230.

This sequence belongs to the tetrahydrofolate dehydrogenase/cyclohydrolase family. As to quaternary structure, homodimer.

It carries out the reaction (6R)-5,10-methylene-5,6,7,8-tetrahydrofolate + NADP(+) = (6R)-5,10-methenyltetrahydrofolate + NADPH. The enzyme catalyses (6R)-5,10-methenyltetrahydrofolate + H2O = (6R)-10-formyltetrahydrofolate + H(+). It functions in the pathway one-carbon metabolism; tetrahydrofolate interconversion. In terms of biological role, catalyzes the oxidation of 5,10-methylenetetrahydrofolate to 5,10-methenyltetrahydrofolate and then the hydrolysis of 5,10-methenyltetrahydrofolate to 10-formyltetrahydrofolate. This is Bifunctional protein FolD 1 from Rubrobacter xylanophilus (strain DSM 9941 / JCM 11954 / NBRC 16129 / PRD-1).